The primary structure comprises 206 residues: Small ribosomal subunit protein uS4 (206 aa).

The S4 RNA-binding domain maps to 96–156 (GRLDNVVYRM…EKSKKQARIK (61 aa)).

It belongs to the universal ribosomal protein uS4 family. In terms of assembly, part of the 30S ribosomal subunit. Contacts protein S5. The interaction surface between S4 and S5 is involved in control of translational fidelity.

In terms of biological role, one of the primary rRNA binding proteins, it binds directly to 16S rRNA where it nucleates assembly of the body of the 30S subunit. With S5 and S12 plays an important role in translational accuracy. This is Small ribosomal subunit protein uS4 from Pasteurella multocida (strain Pm70).